Consider the following 142-residue polypeptide: MAYKHIGVAISGNEEDALLVNKALELARHNDAHLTLIHIDDGLSELYPGIYFPATEDILQLLKNKSDNKLYKLTKNIQWPKTKLRIERGEMPETLLEIMQKEQCDLLVCGHHHSFINRLMPAYRGMINKMSADLLIVPFIDK.

This sequence belongs to the universal stress protein A family.

It is found in the cytoplasm. Functionally, required for resistance to DNA-damaging agents. The protein is Universal stress protein D (uspD) of Escherichia coli (strain K12).